Consider the following 71-residue polypeptide: Large ribosomal subunit protein uL29 (71 aa).

Belongs to the universal ribosomal protein uL29 family.

This chain is Large ribosomal subunit protein uL29, found in Rickettsia typhi (strain ATCC VR-144 / Wilmington).